We begin with the raw amino-acid sequence, 114 residues long: Beta-microseminoprotein J1 (114 aa).

The first 20 residues, 1 to 20 (MNVLLGGLVIFATFVTLCNA), serve as a signal peptide directing secretion. 5 cysteine pairs are disulfide-bonded: Cys22–Cys70, Cys38–Cys62, Cys57–Cys93, Cys60–Cys69, and Cys84–Cys107.

It belongs to the beta-microseminoprotein family.

The protein localises to the secreted. This chain is Beta-microseminoprotein J1 (MSPJ), found in Saguinus oedipus (Cotton-top tamarin).